A 474-amino-acid chain; its full sequence is Dol-P-Glc:Glc(2)Man(9)GlcNAc(2)-PP-Dol alpha-1,2-glucosyltransferase (474 aa).

Over 1–6 the chain is Cytoplasmic; sequence MAQLEG. The helical transmembrane segment at 7–27 threads the bilayer; it reads YYFSAALSCTFLVSCLLFSAF. The Extracellular segment spans residues 28 to 64; that stretch reads SRALREPYMDEIFHLPQAQRYCEGRFSLSQWDPMITT. Residues 65–85 traverse the membrane as a helical segment; sequence LPGLYLVSVGVVKPASWLLGW. Residues 86-97 are Cytoplasmic-facing; sequence SEHVICSIGVLR. A helical membrane pass occupies residues 98 to 118; the sequence is FVNLLFSVGNFYLLYLLFRKV. Residues 119 to 126 are Extracellular-facing; that stretch reads QPRNKASS. The helical transmembrane segment at 127-147 threads the bilayer; sequence SIQRILSTLTLAVFPTLYFFN. Residues 148 to 150 are Cytoplasmic-facing; the sequence is FLY. A helical membrane pass occupies residues 151–171; the sequence is YTEAGSVFFTLFAYLMCLYGN. Over 172-175 the chain is Extracellular; that stretch reads HRTS. The chain crosses the membrane as a helical span at residues 176–196; that stretch reads ALLGFCGFMFRQTNIIWAAFC. Residues 197–256 lie on the Cytoplasmic side of the membrane; that stretch reads AGHLIAQKCSEAWKIELQKKKEERLAPTKGPLSELRRVLQFLLVYAMSLKNLRMLFLLTW. A helical membrane pass occupies residues 257 to 277; it reads PYVLLLLAFFAFVVVNGGIVV. The Extracellular segment spans residues 278-283; the sequence is GDRSSH. The chain crosses the membrane as a helical span at residues 284–304; that stretch reads EACLHFPQLFYFFSFTAFFSF. Topologically, residues 305–317 are cytoplasmic; it reads PHLLSLTKVKTFL. The helical transmembrane segment at 318–338 threads the bilayer; it reads SLVWKRRVQFSVVTLVSILLV. Topologically, residues 339–365 are extracellular; it reads WKFTYVHKYLLADNRHYTFYVWKRVFQ. Residues 366-386 traverse the membrane as a helical segment; it reads RHEVVKYLLVPAYIFAGWAIA. Over 387-392 the chain is Cytoplasmic; that stretch reads DSLKAK. A helical transmembrane segment spans residues 393-413; it reads SIFWNLMFFVCLVASTVPQKL. Over 414 to 436 the chain is Extracellular; it reads LEFRYFILPYIIYRLNIPLPPIS. Residues 437-457 form a helical membrane-spanning segment; the sequence is RLVCELGCYTVVNFVTFYIFL. The Cytoplasmic segment spans residues 458 to 473; it reads NKTFQWPNSQDIQRFM.

This sequence belongs to the ALG10 glucosyltransferase family. As to quaternary structure, interacts with KCNH1; may regulate KCNH1, possibly by regulating its N-glycosylation. Interacts with KCNH2; may reduce KCNH2 sensitivity to classic proarrhythmic drug blockade, possibly by regulating its N-glycosylation.

It is found in the endoplasmic reticulum membrane. The enzyme catalyses an alpha-D-Glc-(1-&gt;3)-alpha-D-Glc-(1-&gt;3)-alpha-D-Man-(1-&gt;2)-alpha-D-Man-(1-&gt;2)-alpha-D-Man-(1-&gt;3)-[alpha-D-Man-(1-&gt;2)-alpha-D-Man-(1-&gt;3)-[alpha-D-Man-(1-&gt;2)-alpha-D-Man-(1-&gt;6)]-alpha-D-Man-(1-&gt;6)]-beta-D-Man-(1-&gt;4)-beta-D-GlcNAc-(1-&gt;4)-alpha-D-GlcNAc-diphospho-di-trans,poly-cis-dolichol + a di-trans,poly-cis-dolichyl beta-D-glucosyl phosphate = a alpha-D-Glc-(1-&gt;2)-alpha-D-Glc-(1-&gt;3)-alpha-D-Glc-(1-&gt;3)-alpha-D-Man-(1-&gt;2)-alpha-D-Man-(1-&gt;2)-alpha-D-Man-(1-&gt;3)-[alpha-D-Man-(1-&gt;2)-alpha-D-Man-(1-&gt;3)-[alpha-D-Man-(1-&gt;2)-alpha-D-Man-(1-&gt;6)]-alpha-D-Man-(1-&gt;6)]-beta-D-Man-(1-&gt;4)-beta-D-GlcNAc-(1-&gt;4)-alpha-D-GlcNAc-diphospho-di-trans,poly-cis-dolichol + a di-trans,poly-cis-dolichyl phosphate + H(+). It participates in protein modification; protein glycosylation. In terms of biological role, dol-P-Glc:Glc(2)Man(9)GlcNAc(2)-PP-Dol alpha-1,2-glucosyltransferase that operates in the biosynthetic pathway of dolichol-linked oligosaccharides, the glycan precursors employed in protein asparagine (N)-glycosylation. The assembly of dolichol-linked oligosaccharides begins on the cytosolic side of the endoplasmic reticulum membrane and finishes in its lumen. The sequential addition of sugars to dolichol pyrophosphate produces dolichol-linked oligosaccharides containing fourteen sugars, including two GlcNAcs, nine mannoses and three glucoses. Once assembled, the oligosaccharide is transferred from the lipid to nascent proteins by oligosaccharyltransferases. In the lumen of the endoplasmic reticulum, adds the third and last glucose residue from dolichyl phosphate glucose (Dol-P-Glc) onto the lipid-linked oligosaccharide intermediate Glc(2)Man(9)GlcNAc(2)-PP-Dol to produce Glc(3)Man(9)GlcNAc(2)-PP-Dol. The polypeptide is Dol-P-Glc:Glc(2)Man(9)GlcNAc(2)-PP-Dol alpha-1,2-glucosyltransferase (Mus musculus (Mouse)).